We begin with the raw amino-acid sequence, 187 residues long: dCTP deaminase, dUMP-forming (187 aa).

DCTP is bound by residues K101–R106 and D119. E129 (proton donor/acceptor) is an active-site residue. Positions 148, 162, and 174 each coordinate dCTP.

It belongs to the dCTP deaminase family. Homotrimer.

It carries out the reaction dCTP + 2 H2O = dUMP + NH4(+) + diphosphate. It functions in the pathway pyrimidine metabolism; dUMP biosynthesis; dUMP from dCTP: step 1/1. Bifunctional enzyme that catalyzes both the deamination of dCTP to dUTP and the hydrolysis of dUTP to dUMP without releasing the toxic dUTP intermediate. The polypeptide is dCTP deaminase, dUMP-forming (Corynebacterium kroppenstedtii (strain DSM 44385 / JCM 11950 / CIP 105744 / CCUG 35717)).